Reading from the N-terminus, the 304-residue chain is Voltage-dependent anion channel-forming protein YneE (304 aa).

Helical transmembrane passes span 28–48 (LLLNFLFSIAVIFMLPWYTHL), 50–70 (IKFTLAPFSILGVAIAIFLGF), 194–214 (VLAGCERIAYTPIPFAYTLIL), and 220–240 (LFCIMLPFALVVDLHYMTPFI).

This sequence belongs to the anion channel-forming bestrophin (TC 1.A.46) family.

The protein resides in the cell membrane. The polypeptide is Voltage-dependent anion channel-forming protein YneE (yneE) (Escherichia coli (strain K12)).